A 189-amino-acid chain; its full sequence is MyoD family inhibitor domain-containing protein 2 (189 aa).

The MDFI domain occupies K28–Y188.

Belongs to the MDFI family.

The sequence is that of MyoD family inhibitor domain-containing protein 2 from Homo sapiens (Human).